The chain runs to 338 residues: Ketol-acid reductoisomerase (NADP(+)) (338 aa).

The region spanning 1-181 (MKVFYDKDCD…GGGKGGIIET (181 aa)) is the KARI N-terminal Rossmann domain. Residues 24-27 (YGSQ), R47, and S52 contribute to the NADP(+) site. Residue H107 is part of the active site. Position 133 (G133) interacts with NADP(+). A KARI C-terminal knotted domain is found at 182-327 (NFKEETETDL…GQLRAMMPWI (146 aa)). Positions 190, 194, 226, and 230 each coordinate Mg(2+). S251 contributes to the substrate binding site.

It belongs to the ketol-acid reductoisomerase family. Requires Mg(2+) as cofactor.

The catalysed reaction is (2R)-2,3-dihydroxy-3-methylbutanoate + NADP(+) = (2S)-2-acetolactate + NADPH + H(+). It carries out the reaction (2R,3R)-2,3-dihydroxy-3-methylpentanoate + NADP(+) = (S)-2-ethyl-2-hydroxy-3-oxobutanoate + NADPH + H(+). Its pathway is amino-acid biosynthesis; L-isoleucine biosynthesis; L-isoleucine from 2-oxobutanoate: step 2/4. It participates in amino-acid biosynthesis; L-valine biosynthesis; L-valine from pyruvate: step 2/4. Its function is as follows. Involved in the biosynthesis of branched-chain amino acids (BCAA). Catalyzes an alkyl-migration followed by a ketol-acid reduction of (S)-2-acetolactate (S2AL) to yield (R)-2,3-dihydroxy-isovalerate. In the isomerase reaction, S2AL is rearranged via a Mg-dependent methyl migration to produce 3-hydroxy-3-methyl-2-ketobutyrate (HMKB). In the reductase reaction, this 2-ketoacid undergoes a metal-dependent reduction by NADPH to yield (R)-2,3-dihydroxy-isovalerate. In Delftia acidovorans (strain DSM 14801 / SPH-1), this protein is Ketol-acid reductoisomerase (NADP(+)).